A 173-amino-acid polypeptide reads, in one-letter code: Large ribosomal subunit protein bL9 (173 aa).

This sequence belongs to the bacterial ribosomal protein bL9 family.

Its function is as follows. Binds to the 23S rRNA. This chain is Large ribosomal subunit protein bL9, found in Chlamydia felis (strain Fe/C-56) (Chlamydophila felis).